Reading from the N-terminus, the 155-residue chain is MEFEAEHEGLTASWVAPAPQGGKGAEGRAGVADEAGHGKTEAECAEDGEKCGDAEMSALDRVQRDHGDKHTESTSRKRIEAKYMDLLVEAERENKNLRKKYNIILDVSTKILVFGTCIMFATGTLIGKGTKIQVPVCNSTNLALAFLAGFLTRHV.

A disordered region spans residues 1–50 (MEFEAEHEGLTASWVAPAPQGGKGAEGRAGVADEAGHGKTEAECAEDGEK). Over residues 34-50 (EAGHGKTEAECAEDGEK) the composition is skewed to basic and acidic residues. Residues 76–107 (RKRIEAKYMDLLVEAERENKNLRKKYNIILDV) adopt a coiled-coil conformation.

In Gallus gallus (Chicken), this protein is Phosphoprotein pp24 (MDV008).